Reading from the N-terminus, the 398-residue chain is Riboflavin biosynthesis protein RibBA (398 aa).

The tract at residues 1–199 (MFHPIEEALD…IKDLIQYRYN (199 aa)) is DHBP synthase. D-ribulose 5-phosphate is bound by residues 26–27 (RE), Asp-31, 138–142 (RAGHT), and Glu-162. Residue Glu-27 coordinates Mg(2+). Mg(2+) is bound at residue His-141. The interval 200-398 (LTTLVEREVD…MNKLGHLLHF (199 aa)) is GTP cyclohydrolase II. 251–255 (RVHSE) lines the GTP pocket. Residues Cys-256, Cys-267, and Cys-269 each contribute to the Zn(2+) site. GTP contacts are provided by residues Gln-272, 294–296 (EGR), and Thr-316. Asp-328 (proton acceptor; for GTP cyclohydrolase activity) is an active-site residue. The Nucleophile; for GTP cyclohydrolase activity role is filled by Arg-330. 2 residues coordinate GTP: Thr-351 and Lys-356.

This sequence in the N-terminal section; belongs to the DHBP synthase family. The protein in the C-terminal section; belongs to the GTP cyclohydrolase II family. Requires Mg(2+) as cofactor. It depends on Mn(2+) as a cofactor. Zn(2+) is required as a cofactor.

It catalyses the reaction D-ribulose 5-phosphate = (2S)-2-hydroxy-3-oxobutyl phosphate + formate + H(+). It carries out the reaction GTP + 4 H2O = 2,5-diamino-6-hydroxy-4-(5-phosphoribosylamino)-pyrimidine + formate + 2 phosphate + 3 H(+). It functions in the pathway cofactor biosynthesis; riboflavin biosynthesis; 2-hydroxy-3-oxobutyl phosphate from D-ribulose 5-phosphate: step 1/1. Its pathway is cofactor biosynthesis; riboflavin biosynthesis; 5-amino-6-(D-ribitylamino)uracil from GTP: step 1/4. Functionally, catalyzes the conversion of D-ribulose 5-phosphate to formate and 3,4-dihydroxy-2-butanone 4-phosphate. In terms of biological role, catalyzes the conversion of GTP to 2,5-diamino-6-ribosylamino-4(3H)-pyrimidinone 5'-phosphate (DARP), formate and pyrophosphate. The protein is Riboflavin biosynthesis protein RibBA of Bacillus subtilis (strain 168).